A 993-amino-acid chain; its full sequence is Synaptonemal complex protein 1 (993 aa).

The Mediates head to head self-assembly of N-terminal ends motif lies at 98–108 (PMSRLYSKLYK). The Nuclear localization signal signature appears at 114–117 (KKWK). 2 coiled-coil regions span residues 117 to 172 (KVSI…LIKE) and 215 to 688 (IEKM…EIEN). The tract at residues 203–359 (ETRQVYVDLN…SQLTEVKEAQ (157 aa)) is interaction with SYCE3. The tract at residues 694-788 (GKLLGEVEKA…VSLKKQLEIE (95 aa)) is required for pH-induced assembly of C-terminal ends into antiparallel tetramers. Residues 697–700 (LGEV) carry the Nuclear localization signal motif. Positions 764-808 (KIALETELSNIRNELVSLKKQLEIEKEEKEKLKMAKENTAILKDK) form a coiled coil. Residues 801–993 (NTAILKDKKD…RLKEAEKLFS (193 aa)) are DNA-binding. A Phosphoserine modification is found at Ser820. The tract at residues 824–861 (TSWKFDSKTTPSQNISRLSSSMDSGKSKDNRDNLRASA) is disordered. Positions 831 to 847 (KTTPSQNISRLSSSMDS) are enriched in polar residues. The span at 848 to 857 (GKSKDNRDNL) shows a compositional bias: basic and acidic residues. The Nuclear localization signal signature appears at 898 to 901 (KKRK).

Structural component of synaptonemal complexes. Homotetramer that consists of an N-terminal four-helical bundle that bifurcates into two elongated C-terminal dimeric coiled coils. This tetrameric building block potentially self-assembles into a supramolecular zipper-like lattice to mediate meiotic chromosome synapsis. Self-assembly is likely initiated by local proton density at chromosome axis, which is predicted to trigger antiparallel back to back assembly of adjacent C-terminal ends into tetrameric structures that anchor to chromosomal DNA. Then the N-terminal ends are predicted to undergo cooperative antiparallel head to head assembly at the midline of synaptonemal complexes central element to form a zipper-like lattice between properly aligned homologous chromosomes. The nascent synapsis generated by SYCP1 is stabilized through interaction with central element proteins SYCE1 and SYCE2. Interacts (via tetrameric core) with SYCE3; the interaction remodels SYCP1 homotetramers to 2:1 heterotrimers with SYCE3. SYCP1/SYCE3 heterotrimers form lattice assemblies as part of the mature synaptonemal complex via both lateral and head-to-head interactions. Forms a complex with EWSR1, PRDM9, SYCP3 and REC8; complex formation is dependent of phosphorylated form of REC8 and requires PRDM9 bound to hotspot DNA; EWSR1 joins PRDM9 with the chromosomal axis through REC8. Interacts with SPO16. In terms of tissue distribution, detected in testis. Detected in spermatocytes (at protein level).

It localises to the nucleus. The protein resides in the chromosome. The protein localises to the centromere. In terms of biological role, major component of the transverse filaments of synaptonemal complexes, formed between homologous chromosomes during meiotic prophase. Required for normal assembly of the central element of the synaptonemal complexes. Required for normal centromere pairing during meiosis. Required for normal meiotic chromosome synapsis during oocyte and spermatocyte development and for normal male and female fertility. This Mus musculus (Mouse) protein is Synaptonemal complex protein 1.